The primary structure comprises 98 residues: Small ribosomal subunit protein eS24 (98 aa).

The protein belongs to the eukaryotic ribosomal protein eS24 family.

In Thermococcus gammatolerans (strain DSM 15229 / JCM 11827 / EJ3), this protein is Small ribosomal subunit protein eS24.